Consider the following 871-residue polypeptide: DNA mismatch repair protein MutS (871 aa).

617–624 lines the ATP pocket; the sequence is GPNMGGKS.

This sequence belongs to the DNA mismatch repair MutS family.

In terms of biological role, this protein is involved in the repair of mismatches in DNA. It is possible that it carries out the mismatch recognition step. This protein has a weak ATPase activity. The protein is DNA mismatch repair protein MutS of Hydrogenovibrio crunogenus (strain DSM 25203 / XCL-2) (Thiomicrospira crunogena).